Here is a 141-residue protein sequence, read N- to C-terminus: Large ribosomal subunit protein uL11 (141 aa).

It belongs to the universal ribosomal protein uL11 family. In terms of assembly, part of the ribosomal stalk of the 50S ribosomal subunit. Interacts with L10 and the large rRNA to form the base of the stalk. L10 forms an elongated spine to which L12 dimers bind in a sequential fashion forming a multimeric L10(L12)X complex. In terms of processing, one or more lysine residues are methylated.

Forms part of the ribosomal stalk which helps the ribosome interact with GTP-bound translation factors. This is Large ribosomal subunit protein uL11 from Helicobacter acinonychis (strain Sheeba).